The sequence spans 122 residues: Large ribosomal subunit protein uL14 (122 aa).

Belongs to the universal ribosomal protein uL14 family. In terms of assembly, part of the 50S ribosomal subunit. Forms a cluster with proteins L3 and L19. In the 70S ribosome, L14 and L19 interact and together make contacts with the 16S rRNA in bridges B5 and B8.

Binds to 23S rRNA. Forms part of two intersubunit bridges in the 70S ribosome. The sequence is that of Large ribosomal subunit protein uL14 from Thermosipho melanesiensis (strain DSM 12029 / CIP 104789 / BI429).